Consider the following 333-residue polypeptide: Olfactory receptor 1078 (333 aa).

Residues methionine 1–proline 25 are Extracellular-facing. An N-linked (GlcNAc...) asparagine glycan is attached at asparagine 5. The chain crosses the membrane as a helical span at residues leucine 26–isoleucine 50. At serine 51–threonine 57 the chain is on the cytoplasmic side. A helical transmembrane segment spans residues proline 58–proline 79. The Extracellular segment spans residues lysine 80 to glutamine 100. Cysteine 97 and cysteine 189 are joined by a disulfide. Residues isoleucine 101–tyrosine 120 form a helical membrane-spanning segment. Topologically, residues aspartate 121–lysine 139 are cytoplasmic. Residues leucine 140 to phenylalanine 158 form a helical membrane-spanning segment. Residues glutamine 159–aspartate 196 lie on the Extracellular side of the membrane. A helical membrane pass occupies residues leucine 197–phenylalanine 219. The Cytoplasmic segment spans residues lysine 220–lysine 236. Residues alanine 237–leucine 260 traverse the membrane as a helical segment. Over serine 261 to alanine 272 the chain is Extracellular. The helical transmembrane segment at threonine 273 to leucine 292 threads the bilayer. At arginine 293–tyrosine 333 the chain is on the cytoplasmic side.

It belongs to the G-protein coupled receptor 1 family. As to expression, olfactory epithelium.

It localises to the cell membrane. Odorant receptor. The chain is Olfactory receptor 1078 (Olr1078) from Rattus norvegicus (Rat).